Reading from the N-terminus, the 83-residue chain is Host transcription reprogramming factor 9 (83 aa).

Residues 1 to 19 form the signal peptide; it reads MQFSKITLAIVLYALGTAA. The segment at 54–77 adopts a C2H2-type zinc-finger fold; it reads YRCDKCEKEFVKGNDFFNHGGRGH.

The protein localises to the secreted. The protein resides in the host nucleus. Functionally, probable secreted effector that translocates into the nuclei of host cells to reprogram the expression of targeted genes by binding on effector binding elements in rice. In Pyricularia oryzae (strain 70-15 / ATCC MYA-4617 / FGSC 8958) (Rice blast fungus), this protein is Host transcription reprogramming factor 9.